The primary structure comprises 245 residues: Polyhedrin (245 aa).

The protein belongs to the polyhedrin family.

In terms of biological role, major component of the virus occlusion bodies, which are large proteinaceous structures (polyhedra), that protect the virus from the outside environment for extended periods until they are ingested by insect larvae. This Hyphantria cunea nuclear polyhedrosis virus (HcNPV) protein is Polyhedrin (PH).